The sequence spans 360 residues: Phospho-N-acetylmuramoyl-pentapeptide-transferase (360 aa).

Transmembrane regions (helical) follow at residues 26–46 (AILGLLTALIFSLWWGPKLIE), 74–94 (MGGLLILAAIFISVLLWGDLG), 97–117 (YVWVMLFVLGSFGLIGFIDDY), 134–154 (YILQSLAALLIAFFLYATAAN), 168–188 (VMPQLGGVFIVLAYFTIVGSS), 199–219 (GLAIMPTVMVAAAFALIAYLS), 236–256 (SGELVIVCTAIVGAGLGFLWF), 263–283 (VFMGDVGSLSLGAALGAIAVL), 288–308 (ILLVIMGGVFVMETVSVILQV), and 338–358 (VIVRFWIISIFLVLLGLATLK).

Belongs to the glycosyltransferase 4 family. MraY subfamily. Requires Mg(2+) as cofactor.

The protein localises to the cell inner membrane. It catalyses the reaction UDP-N-acetyl-alpha-D-muramoyl-L-alanyl-gamma-D-glutamyl-meso-2,6-diaminopimeloyl-D-alanyl-D-alanine + di-trans,octa-cis-undecaprenyl phosphate = di-trans,octa-cis-undecaprenyl diphospho-N-acetyl-alpha-D-muramoyl-L-alanyl-D-glutamyl-meso-2,6-diaminopimeloyl-D-alanyl-D-alanine + UMP. Its pathway is cell wall biogenesis; peptidoglycan biosynthesis. In terms of biological role, catalyzes the initial step of the lipid cycle reactions in the biosynthesis of the cell wall peptidoglycan: transfers peptidoglycan precursor phospho-MurNAc-pentapeptide from UDP-MurNAc-pentapeptide onto the lipid carrier undecaprenyl phosphate, yielding undecaprenyl-pyrophosphoryl-MurNAc-pentapeptide, known as lipid I. This chain is Phospho-N-acetylmuramoyl-pentapeptide-transferase, found in Shewanella putrefaciens (strain CN-32 / ATCC BAA-453).